The chain runs to 337 residues: S-adenosylmethionine:tRNA ribosyltransferase-isomerase (337 aa).

Belongs to the QueA family. In terms of assembly, monomer.

The protein localises to the cytoplasm. The catalysed reaction is 7-aminomethyl-7-carbaguanosine(34) in tRNA + S-adenosyl-L-methionine = epoxyqueuosine(34) in tRNA + adenine + L-methionine + 2 H(+). It functions in the pathway tRNA modification; tRNA-queuosine biosynthesis. Transfers and isomerizes the ribose moiety from AdoMet to the 7-aminomethyl group of 7-deazaguanine (preQ1-tRNA) to give epoxyqueuosine (oQ-tRNA). The chain is S-adenosylmethionine:tRNA ribosyltransferase-isomerase from Legionella pneumophila (strain Lens).